The chain runs to 335 residues: Glyceraldehyde-3-phosphate dehydrogenase (335 aa).

NAD(+)-binding positions include 12–13 (RI), aspartate 34, and arginine 79. Residues 150 to 152 (SCT), threonine 181, 210 to 211 (TG), and arginine 233 each bind D-glyceraldehyde 3-phosphate. Cysteine 151 acts as the Nucleophile in catalysis. Asparagine 315 is an NAD(+) binding site.

It belongs to the glyceraldehyde-3-phosphate dehydrogenase family. Homotetramer.

It localises to the cytoplasm. It catalyses the reaction D-glyceraldehyde 3-phosphate + phosphate + NAD(+) = (2R)-3-phospho-glyceroyl phosphate + NADH + H(+). The protein operates within carbohydrate degradation; glycolysis; pyruvate from D-glyceraldehyde 3-phosphate: step 1/5. This chain is Glyceraldehyde-3-phosphate dehydrogenase (GPD), found in Ogataea parapolymorpha (strain ATCC 26012 / BCRC 20466 / JCM 22074 / NRRL Y-7560 / DL-1) (Yeast).